The following is a 403-amino-acid chain: Acetyl-CoA acetyltransferase IB (403 aa).

The active-site Acyl-thioester intermediate is cysteine 91. Active-site proton acceptor residues include histidine 353 and cysteine 383. The Microbody targeting signal signature appears at 401 to 403 (AKL).

This sequence belongs to the thiolase-like superfamily. Thiolase family. In terms of assembly, multimeric.

It localises to the peroxisome. It catalyses the reaction 2 acetyl-CoA = acetoacetyl-CoA + CoA. The protein operates within metabolic intermediate biosynthesis; (R)-mevalonate biosynthesis; (R)-mevalonate from acetyl-CoA: step 1/3. This Candida tropicalis (Yeast) protein is Acetyl-CoA acetyltransferase IB (PACTB).